The chain runs to 681 residues: Epithelial splicing regulatory protein 1 (681 aa).

RRM domains follow at residues Thr225–Gly302, Val326–Ala406, and Asp445–Ala525. A Phosphoserine modification is found at Ser543. Residue Arg582 is modified to Omega-N-methylarginine.

This sequence belongs to the ESRP family. As to expression, epithelial cell-specific.

It is found in the nucleus. MRNA splicing factor that regulates the formation of epithelial cell-specific isoforms. Specifically regulates the expression of FGFR2-IIIb, an epithelial cell-specific isoform of FGFR2. Also regulates the splicing of CD44, CTNND1, ENAH, 3 transcripts that undergo changes in splicing during the epithelial-to-mesenchymal transition (EMT). Acts by directly binding specific sequences in mRNAs. Binds the GU-rich sequence motifs in the ISE/ISS-3, a cis-element regulatory region present in the mRNA of FGFR2. Regulates splicing and expression of genes involved in inner ear development, auditory hair cell differentiation, and cell fate specification in the cochlear epithelium. This chain is Epithelial splicing regulatory protein 1 (ESRP1), found in Homo sapiens (Human).